Consider the following 450-residue polypeptide: Crh-like protein 4 (450 aa).

An N-terminal signal peptide occupies residues 1 to 21 (MRLSLVGVAIGLLSSSAIVTA). The cysteines at positions 27 and 34 are disulfide-linked. The GH16 domain occupies 46–228 (YDFTKGSSPD…WAGGETDYSA (183 aa)). Glu-119 functions as the Nucleophile in the catalytic mechanism. Glu-123 acts as the Proton donor in catalysis. Chitin contacts are provided by Glu-123, Lys-201, Trp-205, and Thr-216. An N-linked (GlcNAc...) asparagine glycan is attached at Asn-383.

This sequence belongs to the glycosyl hydrolase 16 family. CRH1 subfamily. In terms of processing, the GPI-like anchor contains a phosphoceramide lipid group. The anchor position has not been determined.

The protein resides in the cell membrane. It is found in the secreted. It localises to the cell wall. It catalyses the reaction Random endo-hydrolysis of N-acetyl-beta-D-glucosaminide (1-&gt;4)-beta-linkages in chitin and chitodextrins.. Dual chitinase/transglycosylase that plays a role in cell wall architecture. Chitinase and transglycosylase activities are coupled. Required for the polysaccharide cross-linking at the septa and the cell wall. More specifically, transfers chitin to 1,6-beta-glucan in the cell wall. The chain is Crh-like protein 4 from Aspergillus fumigatus (strain ATCC MYA-4609 / CBS 101355 / FGSC A1100 / Af293) (Neosartorya fumigata).